A 309-amino-acid chain; its full sequence is Solute carrier family 25 member 48 (309 aa).

Solcar repeat units lie at residues 3 to 86 (VFQL…TQRL), 99 to 209 (CSML…FCNW), and 218 to 305 (PPPC…SLQF). 6 helical membrane passes run 9 to 29 (FLAGWIGGASSVIVGHPLDTV), 61 to 81 (GLSFPLASITLYNSMVFGFFS), 105 to 125 (TVASMLTGLVSVGVGAPVDLV), 186 to 206 (GAMILRDIPGYALYFIPYTLF), 218 to 238 (PPPCCIWLAGGLAGSISWVTA), and 281 to 299 (ATVNAIRGFPMCATMFLGY).

Belongs to the mitochondrial carrier (TC 2.A.29) family.

Its subcellular location is the mitochondrion inner membrane. The chain is Solute carrier family 25 member 48 (slc25a48) from Danio rerio (Zebrafish).